Consider the following 491-residue polypeptide: MANYFNTLNLRQQLAQLGKCRFMGRDEFADGASYLQGKKVVIVGCGAQGLNQGLNMRDSGLDISYALRKEAIAEKRASWRKATENGFKVGTYEELIPQADLVVNLTPDKQHSDVVRSVQPLMKDGAALGYSHGFNIVEVGEQIRKDITVVMVAPKCPGTEVREEYKRGFGVPTLIAVHPENDPKGEGMAIAKAWAAATGGHRAGVLESSFVAEVKSDLMGEQTILCGMLQAGSLLCFDKLVAEGTDPAYAEKLIQFGWETITEALKQGGITLMMDRLSNPAKLRAYALSEQLKEIMAPLFQKHMDDIISGEFSSGMMADWANDDKKLLTWREETGKTAFETAPQYEGKIGEQEYFDKGVLMIAMVKAGVELAFETMVDSGIIEESAYYESLHELPLIANTIARKRLYEMNVVISDTAEYGNYLFSYACVPLLKEFMTTLQTGDLGKAIAEGAVDNAQLRDVNEAIRSHAIEQVGKKLRGYMTDMKRIAVAG.

A KARI N-terminal Rossmann domain is found at alanine 15–serine 208. Residues cysteine 45–glutamine 48, arginine 68, arginine 76, serine 78, and aspartate 108–glutamine 110 contribute to the NADP(+) site. Residue histidine 132 is part of the active site. An NADP(+)-binding site is contributed by glycine 158. 2 KARI C-terminal knotted domains span residues serine 209 to glutamine 344 and tyrosine 345 to methionine 484. Residues aspartate 217, glutamate 221, glutamate 389, and glutamate 393 each contribute to the Mg(2+) site. Serine 414 provides a ligand contact to substrate.

The protein belongs to the ketol-acid reductoisomerase family. Mg(2+) is required as a cofactor.

It carries out the reaction (2R)-2,3-dihydroxy-3-methylbutanoate + NADP(+) = (2S)-2-acetolactate + NADPH + H(+). The enzyme catalyses (2R,3R)-2,3-dihydroxy-3-methylpentanoate + NADP(+) = (S)-2-ethyl-2-hydroxy-3-oxobutanoate + NADPH + H(+). Its pathway is amino-acid biosynthesis; L-isoleucine biosynthesis; L-isoleucine from 2-oxobutanoate: step 2/4. It functions in the pathway amino-acid biosynthesis; L-valine biosynthesis; L-valine from pyruvate: step 2/4. Functionally, involved in the biosynthesis of branched-chain amino acids (BCAA). Catalyzes an alkyl-migration followed by a ketol-acid reduction of (S)-2-acetolactate (S2AL) to yield (R)-2,3-dihydroxy-isovalerate. In the isomerase reaction, S2AL is rearranged via a Mg-dependent methyl migration to produce 3-hydroxy-3-methyl-2-ketobutyrate (HMKB). In the reductase reaction, this 2-ketoacid undergoes a metal-dependent reduction by NADPH to yield (R)-2,3-dihydroxy-isovalerate. The polypeptide is Ketol-acid reductoisomerase (NADP(+)) (Klebsiella pneumoniae (strain 342)).